A 108-amino-acid chain; its full sequence is Succinate dehydrogenase assembly factor 4, mitochondrial (108 aa).

Over residues 33–46 the composition is skewed to low complexity; sequence NNNNNNNNNNNNNN. Disordered regions lie at residues 33-59 and 79-108; these read NNNNNNNNNNNNNNISNKKAEMSKENQ and NPITKEIGGPKGPEPTRYNDWERNGRVSDF. Basic and acidic residues predominate over residues 95-108; the sequence is RYNDWERNGRVSDF.

The protein belongs to the SDHAF4 family. In terms of assembly, interacts with SdhA in its FAD-bound form.

Its subcellular location is the mitochondrion matrix. In terms of biological role, plays an essential role in the assembly of succinate dehydrogenase (SDH), an enzyme complex (also referred to as respiratory complex II) that is a component of both the tricarboxylic acid (TCA) cycle and the mitochondrial electron transport chain, and which couples the oxidation of succinate to fumarate with the reduction of ubiquinone (coenzyme Q) to ubiquinol. Binds to the flavoprotein subunit SdhA in its FAD-bound form, blocking the generation of excess reactive oxygen species (ROS) and facilitating its assembly with the iron-sulfur protein subunit SdhB into the SDH catalytic dimer. In Dictyostelium discoideum (Social amoeba), this protein is Succinate dehydrogenase assembly factor 4, mitochondrial.